We begin with the raw amino-acid sequence, 134 residues long: Interleukin-5 (134 aa).

A signal peptide spans 1–21 (MRMHLHLTLVALGAAYVCANA). Residues asparagine 76 and asparagine 90 are each glycosylated (N-linked (GlcNAc...) asparagine).

Belongs to the IL-5 family. As to quaternary structure, homodimer; disulfide-linked. Interacts with IL5RA. Interacts with CSF2RB.

It localises to the secreted. Its function is as follows. Homodimeric cytokine expressed predominantly by T-lymphocytes and NK cells that plays an important role in the survival, differentiation, and chemotaxis of eosinophils. Also acts on activated and resting B-cells to induce immunoglobulin production, growth, and differentiation. Mechanistically, exerts its biological effects through a receptor composed of IL5RA subunit and the cytokine receptor common subunit beta/CSF2RB. Binding to the receptor leads to activation of various kinases including LYN, SYK and JAK2 and thereby propagates signals through the RAS-MAPK and JAK-STAT5 pathways respectively. The polypeptide is Interleukin-5 (IL5) (Bos taurus (Bovine)).